The primary structure comprises 266 residues: Interleukin-1 beta (266 aa).

Residues 1 to 113 constitute a propeptide that is removed on maturation; that stretch reads MAPVPEPINE…ETSSDEFLCD (113 aa).

It belongs to the IL-1 family. Monomer. In its precursor form, weakly interacts with full-length MEFV; the mature cytokine does not interact at all. Interacts with integrins ITGAV:ITGBV and ITGA5:ITGB1; integrin-binding is required for IL1B signaling. Interacts with cargo receptor TMED10; the interaction is direct and is required for the secretion of IL1B mature form. Interacts with HSP90AB1; the interaction facilitates cargo translocation into the ERGIC. Interacts with HSP90B1; the interaction facilitates cargo translocation into the ERGIC.

The protein resides in the cytoplasm. Its subcellular location is the cytosol. It is found in the secreted. It localises to the lysosome. The protein localises to the extracellular exosome. Potent pro-inflammatory cytokine. Initially discovered as the major endogenous pyrogen, induces prostaglandin synthesis, neutrophil influx and activation, T-cell activation and cytokine production, B-cell activation and antibody production, and fibroblast proliferation and collagen production. Promotes Th17 differentiation of T-cells. Synergizes with IL12/interleukin-12 to induce IFNG synthesis from T-helper 1 (Th1) cells. Plays a role in angiogenesis by inducing VEGF production synergistically with TNF and IL6. Involved in transduction of inflammation downstream of pyroptosis: its mature form is specifically released in the extracellular milieu by passing through the gasdermin-D (GSDMD) pore. In Cervus elaphus (Red deer), this protein is Interleukin-1 beta (IL1B).